Consider the following 172-residue polypeptide: Stellate protein CG33236/CG33240/CG33244/CG33245 (172 aa).

This sequence belongs to the casein kinase 2 subunit beta family. Interacts in vitro with the casein kinase 2 alpha subunit (CkII-alpha). The relevance of such interaction is however unclear in vivo. As to expression, probably not expressed in wild-type flies. In males lacking the Y chromosome, it is testis-specific and constitutes the main component of star-shaped crystals.

Unknown. In males lacking the Y chromosome, its strong overexpression leads to the appearance of proteinaceous star-shaped crystals in the primary spermatocytes causing meiotic drive, possibly by interfering with normal casein kinase 2 activity. This is Stellate protein CG33236/CG33240/CG33244/CG33245 (Ste:CG33236) from Drosophila melanogaster (Fruit fly).